Reading from the N-terminus, the 432-residue chain is 3-phosphoshikimate 1-carboxyvinyltransferase (432 aa).

Positions 22, 23, and 27 each coordinate 3-phosphoshikimate. Lysine 22 contributes to the phosphoenolpyruvate binding site. Residues glycine 96 and arginine 127 each contribute to the phosphoenolpyruvate site. 3-phosphoshikimate is bound by residues serine 173, serine 174, glutamine 175, serine 201, aspartate 316, asparagine 339, and lysine 343. A phosphoenolpyruvate-binding site is contributed by glutamine 175. Aspartate 316 acts as the Proton acceptor in catalysis. Phosphoenolpyruvate is bound by residues arginine 347, arginine 391, and lysine 416.

The protein belongs to the EPSP synthase family. Monomer.

It is found in the cytoplasm. It catalyses the reaction 3-phosphoshikimate + phosphoenolpyruvate = 5-O-(1-carboxyvinyl)-3-phosphoshikimate + phosphate. It functions in the pathway metabolic intermediate biosynthesis; chorismate biosynthesis; chorismate from D-erythrose 4-phosphate and phosphoenolpyruvate: step 6/7. Catalyzes the transfer of the enolpyruvyl moiety of phosphoenolpyruvate (PEP) to the 5-hydroxyl of shikimate-3-phosphate (S3P) to produce enolpyruvyl shikimate-3-phosphate and inorganic phosphate. This chain is 3-phosphoshikimate 1-carboxyvinyltransferase, found in Histophilus somni (strain 2336) (Haemophilus somnus).